A 75-amino-acid polypeptide reads, in one-letter code: Small ribosomal subunit protein bS18 (75 aa).

The protein belongs to the bacterial ribosomal protein bS18 family. In terms of assembly, part of the 30S ribosomal subunit. Forms a tight heterodimer with protein bS6.

Its function is as follows. Binds as a heterodimer with protein bS6 to the central domain of the 16S rRNA, where it helps stabilize the platform of the 30S subunit. This chain is Small ribosomal subunit protein bS18, found in Legionella pneumophila (strain Paris).